Reading from the N-terminus, the 243-residue chain is Pyridoxine 5'-phosphate synthase (243 aa).

Asn-9 provides a ligand contact to 3-amino-2-oxopropyl phosphate. 11–12 (DH) lines the 1-deoxy-D-xylulose 5-phosphate pocket. Arg-20 is a 3-amino-2-oxopropyl phosphate binding site. His-45 acts as the Proton acceptor in catalysis. Residues Arg-47 and His-52 each contribute to the 1-deoxy-D-xylulose 5-phosphate site. Glu-72 acts as the Proton acceptor in catalysis. Residue Thr-102 participates in 1-deoxy-D-xylulose 5-phosphate binding. The active-site Proton donor is His-193. Residues Gly-194 and 215–216 (GH) each bind 3-amino-2-oxopropyl phosphate.

This sequence belongs to the PNP synthase family. Homooctamer; tetramer of dimers.

Its subcellular location is the cytoplasm. The catalysed reaction is 3-amino-2-oxopropyl phosphate + 1-deoxy-D-xylulose 5-phosphate = pyridoxine 5'-phosphate + phosphate + 2 H2O + H(+). It participates in cofactor biosynthesis; pyridoxine 5'-phosphate biosynthesis; pyridoxine 5'-phosphate from D-erythrose 4-phosphate: step 5/5. Functionally, catalyzes the complicated ring closure reaction between the two acyclic compounds 1-deoxy-D-xylulose-5-phosphate (DXP) and 3-amino-2-oxopropyl phosphate (1-amino-acetone-3-phosphate or AAP) to form pyridoxine 5'-phosphate (PNP) and inorganic phosphate. The sequence is that of Pyridoxine 5'-phosphate synthase from Vibrio cholerae serotype O1 (strain ATCC 39315 / El Tor Inaba N16961).